A 68-amino-acid polypeptide reads, in one-letter code: Adipokinetic prohormone type 1 (68 aa).

An N-terminal signal peptide occupies residues Met-1 to Ala-20. Gln-21 is subject to Pyrrolidone carboxylic acid. Gly-30 is subject to Glycine amide. Residues Ser-34–Ser-68 constitute a propeptide that is removed on maturation.

In terms of tissue distribution, expressed in antennal lobe (AL), corpora cardiaca (CC), corpora allata (CA) and gnathal ganglion (GNG) (at protein level). Expression in CC and CA detected in all animals, expression in GNG in some animals and in AL in few animals (at protein level).

Its subcellular location is the secreted. This hormone, released from cells in the corpora cardiaca, causes release of diglycerides from the fat body and stimulation of muscles to use these diglycerides as an energy source during energy-demanding processes. In Agrotis ipsilon (Black cutworm moth), this protein is Adipokinetic prohormone type 1.